Consider the following 413-residue polypeptide: Phosphopentomutase (413 aa).

Mn(2+)-binding residues include D11, D306, H311, D347, H348, and H359.

This sequence belongs to the phosphopentomutase family. Mn(2+) serves as cofactor.

It is found in the cytoplasm. It catalyses the reaction 2-deoxy-alpha-D-ribose 1-phosphate = 2-deoxy-D-ribose 5-phosphate. It carries out the reaction alpha-D-ribose 1-phosphate = D-ribose 5-phosphate. It functions in the pathway carbohydrate degradation; 2-deoxy-D-ribose 1-phosphate degradation; D-glyceraldehyde 3-phosphate and acetaldehyde from 2-deoxy-alpha-D-ribose 1-phosphate: step 1/2. In terms of biological role, isomerase that catalyzes the conversion of deoxy-ribose 1-phosphate (dRib-1-P) and ribose 1-phosphate (Rib-1-P) to deoxy-ribose 5-phosphate (dRib-5-P) and ribose 5-phosphate (Rib-5-P), respectively. The polypeptide is Phosphopentomutase (Helicobacter acinonychis (strain Sheeba)).